The following is a 291-amino-acid chain: Ribosomal protein L11 methyltransferase (291 aa).

S-adenosyl-L-methionine contacts are provided by T136, G159, D181, and N228.

The protein belongs to the methyltransferase superfamily. PrmA family.

The protein resides in the cytoplasm. The enzyme catalyses L-lysyl-[protein] + 3 S-adenosyl-L-methionine = N(6),N(6),N(6)-trimethyl-L-lysyl-[protein] + 3 S-adenosyl-L-homocysteine + 3 H(+). Methylates ribosomal protein L11. This is Ribosomal protein L11 methyltransferase from Rhizobium meliloti (strain 1021) (Ensifer meliloti).